The sequence spans 198 residues: Recombination protein RecR (198 aa).

The C4-type zinc finger occupies 57–72 (CSVCGHITDRDPCYIC). In terms of domain architecture, Toprim spans 80–175 (SVVCVVQEPK…KVTRIAHGLP (96 aa)).

This sequence belongs to the RecR family.

Its function is as follows. May play a role in DNA repair. It seems to be involved in an RecBC-independent recombinational process of DNA repair. It may act with RecF and RecO. The polypeptide is Recombination protein RecR (Bacillus cytotoxicus (strain DSM 22905 / CIP 110041 / 391-98 / NVH 391-98)).